The sequence spans 264 residues: Phosphonoacetaldehyde hydrolase (264 aa).

Asp-9 acts as the Nucleophile in catalysis. Positions 9 and 11 each coordinate Mg(2+). Catalysis depends on Lys-50, which acts as the Schiff-base intermediate with substrate. Position 183 (Asp-183) interacts with Mg(2+).

This sequence belongs to the HAD-like hydrolase superfamily. PhnX family. In terms of assembly, homodimer. It depends on Mg(2+) as a cofactor.

It carries out the reaction phosphonoacetaldehyde + H2O = acetaldehyde + phosphate + H(+). In terms of biological role, involved in phosphonate degradation. The chain is Phosphonoacetaldehyde hydrolase from Bacillus cereus (strain G9842).